We begin with the raw amino-acid sequence, 498 residues long: Probable malate:quinone oxidoreductase (498 aa).

The protein belongs to the MQO family. FAD serves as cofactor.

The catalysed reaction is (S)-malate + a quinone = a quinol + oxaloacetate. It functions in the pathway carbohydrate metabolism; tricarboxylic acid cycle; oxaloacetate from (S)-malate (quinone route): step 1/1. The sequence is that of Probable malate:quinone oxidoreductase from Granulibacter bethesdensis (strain ATCC BAA-1260 / CGDNIH1).